Reading from the N-terminus, the 200-residue chain is MHLNENTKILGHRVILVPYEARHVPKYHEWMSNETLRELTASEELTLEEEHEMQRSWREDSDKLTFIVLDAETYSRDQDEIAAMVGDTNLFLHQDPDSQIPTAEAEIMIAEPYARGKGFGREAMLLMLKYAQSQPQLKLDKFEVKIDMDNAASLHLFKSFMFVETRRVEIFHEVTLERPITPDWINWLDQQVDLRMQCYQ.

Residues 34–181 (ETLRELTASE…HEVTLERPIT (148 aa)) enclose the N-acetyltransferase domain.

Belongs to the acetyltransferase family. GNAT subfamily. As to quaternary structure, interacts with microtubules as well as alpha/beta-tubulin heterodimers.

It is found in the nucleus. The protein localises to the cytoplasm. It localises to the cytoskeleton. The protein resides in the spindle. Its subcellular location is the spindle pole. The enzyme catalyses N-terminal L-methionyl-[tubulin] + acetyl-CoA = N-terminal N(alpha)-acetyl-L-methionyl-[tubulin] + CoA + H(+). Functionally, N-acetyltransferase that mediates the acetylation of the N-terminal residues of alpha- and beta-tubulin. Required for microtubule stability and inhibition of JNK signaling to promote cell survival during development, possibly acting independently of its N-acetyltransferase activity. Necessary for the stabilization of spindle microtubules and for mitosis progression. Regulates microtubule stability by inhibiting Spastin-mediated depolymerization and promoting Eb1-mediated polymerization. This Drosophila melanogaster (Fruit fly) protein is Alpha/beta-tubulin-N-acetyltransferase 9.